We begin with the raw amino-acid sequence, 259 residues long: Sugar fermentation stimulation protein homolog (259 aa).

Belongs to the SfsA family.

This Chloroflexus aurantiacus (strain ATCC 29364 / DSM 637 / Y-400-fl) protein is Sugar fermentation stimulation protein homolog.